Consider the following 238-residue polypeptide: MSSPITPLSPGCVMLPARPEPLPVDPKTTAVIVIDMQNAYASPGGYLDLAGFDISGAAKVTHEIKGVLEVARSAGMTVIYFQNGWDDGYVEAGGPGSPNWWKSNALKTMRARPELQGKLLARGQWDYELVDDLTPQPGDIRLHKTRYSGFFNSQLDSVLRARGIRHLVFTGIATNVCVESTLRDGFMLEYFGTVLEDATHQAGPDFVQKAALFNIETFFGWVSTTADFKGTFGQLAPG.

The Proton acceptor role is filled by Asp-35. Residue Lys-144 is part of the active site. Catalysis depends on Cys-177, which acts as the Nucleophile.

It belongs to the isochorismatase family. RutB subfamily.

The enzyme catalyses (Z)-3-ureidoacrylate + H2O + H(+) = (Z)-3-aminoacrylate + NH4(+) + CO2. It carries out the reaction (Z)-3-ureidoacrylate + H2O = (Z)-3-aminoacrylate + carbamate + H(+). The catalysed reaction is (Z)-2-methylureidoacrylate + H2O + H(+) = (Z)-2-methylaminoacrylate + NH4(+) + CO2. Functionally, hydrolyzes ureidoacrylate to form aminoacrylate and carbamate. The carbamate hydrolyzes spontaneously, thereby releasing one of the nitrogen atoms of the pyrimidine ring as ammonia and one of its carbon atoms as CO2. This is Ureidoacrylate amidohydrolase RutB from Caulobacter vibrioides (strain NA1000 / CB15N) (Caulobacter crescentus).